Consider the following 956-residue polypeptide: Angiomotin-like protein 1 (956 aa).

The segment at 197–246 (QSQFFRGQQQQQQQQGAVGHGYYMAGGTSQKSRTEGRPTVNRANSGQAHK) is disordered. Phosphoserine occurs at positions 241 and 269. Residues 259-279 (RSLSERIMQLSLERNGAKQHL) adopt a coiled-coil conformation. Disordered stretches follow at residues 274-322 (GAKQ…QMMS), 382-405 (PSTM…LHSV), and 411-430 (LPMA…SQQL). A compositionally biased stretch (gly residues) spans 282–294 (SGNGKGFKVGGGP). S295 bears the Phosphoserine mark. Residues 382-398 (PSTMQQHSPMSSQTSSA) are compositionally biased toward polar residues. Coiled coils occupy residues 438–639 (VERA…WLER) and 665–694 (ALLE…YLEE). S720 carries the phosphoserine modification. Residues 729 to 762 (SLEAHIWQEEEEVVQANRRCQDMEYTIKNLHAKI) are a coiled coil. Residues 773–823 (QQRSRKDAGKTDSSSLRPARSVPSIAAATGTHSRQTSLTSSQLAEEKKEEK) are disordered. 3 positions are modified to phosphoserine: S793, S805, and S828. Positions 802 to 815 (GTHSRQTSLTSSQL) are enriched in polar residues. Disordered stretches follow at residues 841–880 (ASAP…TQTD) and 894–944 (PSRG…LHKP). Positions 852 to 866 (SALSSIASTTAASSA) are enriched in low complexity. A Phosphoserine modification is found at S900. T902 bears the Phosphothreonine mark. At S906 the chain carries Phosphoserine. The PDZ-binding signature appears at 953–956 (EVLI).

It belongs to the angiomotin family. Polyubiquitinated by NEDD4, leading to proteasomal degradation.

It localises to the cell junction. The protein resides in the tight junction. Functionally, inhibits the Wnt/beta-catenin signaling pathway, probably by recruiting CTNNB1 to recycling endosomes and hence preventing its translocation to the nucleus. The sequence is that of Angiomotin-like protein 1 (AMOTL1) from Homo sapiens (Human).